Here is a 309-residue protein sequence, read N- to C-terminus: Malate dehydrogenase (309 aa).

NAD(+) is bound by residues 8–13 (GAGLVG) and aspartate 33. 2 residues coordinate substrate: arginine 82 and arginine 88. Residues asparagine 95 and 118–120 (VSN) each bind NAD(+). The substrate site is built by asparagine 120 and arginine 151. Catalysis depends on histidine 175, which acts as the Proton acceptor.

The protein belongs to the LDH/MDH superfamily. MDH type 3 family.

It carries out the reaction (S)-malate + NAD(+) = oxaloacetate + NADH + H(+). Catalyzes the reversible oxidation of malate to oxaloacetate. In Pseudomonas putida (strain ATCC 700007 / DSM 6899 / JCM 31910 / BCRC 17059 / LMG 24140 / F1), this protein is Malate dehydrogenase.